Consider the following 519-residue polypeptide: MIOREX complex component 12 (519 aa).

Residues 1–35 (MLRSLHSAATLSNKRFYSLISHSNRKNIIKKLLRH) constitute a mitochondrion transit peptide.

Associates with the mitochondrial ribosome.

The protein localises to the mitochondrion. Component of MIOREX complexes, large expressome-like assemblies of ribosomes with factors involved in all the steps of post-transcriptional gene expression. The protein is MIOREX complex component 12 of Saccharomyces cerevisiae (strain ATCC 204508 / S288c) (Baker's yeast).